A 78-amino-acid polypeptide reads, in one-letter code: Lantibiotic cinnamycin (78 aa).

A propeptide spanning residues 1 to 59 (MTASILQQSVVDADFRAALLENPAAFGASAAALPTPVEAQDQASLDFWTKDIAATEAFA) is cleaved from the precursor. Cross-links (beta-methyllanthionine (Cys-Thr)) lie at residues 60–77 (CRQS…DGNT) and 64–70 (CSFGPFT). The segment at residues 63 to 73 (SCSFGPFTFVC) is a cross-link (lanthionine (Ser-Cys)). The lysinoalanine (Ser-Lys) cross-link spans 65–78 (SFGPFTFVCDGNTK). D74 bears the (3R)-3-hydroxyaspartate mark.

The protein belongs to the type B lantibiotic family. Maturation of lantibiotics involves the enzymatic conversion of Thr, and Ser into dehydrated AA and the formation of thioether bonds with cysteine or the formation of dialkylamine bonds with lysine. This is followed by membrane translocation and cleavage of the modified precursor.

Can act as inhibitor of the enzyme phospholipase A2, and of the angiotensin-converting enzyme. Shows inhibitory activities against herpes simplex virus and immunopotentiating activities. Its antimicrobial activities are not very pronounced. In Streptomyces griseoverticillatus (Streptoverticillium griseoverticillatum), this protein is Lantibiotic cinnamycin (cinA).